The chain runs to 623 residues: Frizzled and smoothened-like protein M (623 aa).

Residues 1 to 18 form the signal peptide; that stretch reads MKSIFIIIFILYVFQVNS. The Extracellular portion of the chain corresponds to 19-243; it reads QTIYPIDPSG…WDQLYNLSNT (225 aa). The region spanning 25–163 is the FZ domain; sequence DPSGKCEQYI…NYSEFNLTNY (139 aa). Cystine bridges form between C30–C100 and C42–C93. 8 N-linked (GlcNAc...) asparagine glycosylation sites follow: N57, N106, N109, N154, N159, N169, N199, and N239. The chain crosses the membrane as a helical span at residues 244–264; the sequence is LAVLSTFGSLYLLVTFIILNP. At 265–273 the chain is on the cytoplasmic side; the sequence is KVTSFDRMY. The chain crosses the membrane as a helical span at residues 274-294; that stretch reads GFFNGSVFMMSLSGVILFIAG. The Extracellular segment spans residues 295-317; that stretch reads GPRALIKDGGARISVFEDPLCSS. Residues 318–338 form a helical membrane-spanning segment; sequence TGFIFQLFAINAILFWAYMGF. The Cytoplasmic segment spans residues 339-354; it reads DLWWRVKYITKPLNIQ. A helical membrane pass occupies residues 355–375; the sequence is KYYVPIAFTISFIFSVIPLAT. The Extracellular segment spans residues 376–397; it reads KNYRMVRGNIHCWVHKAVLQNT. A helical transmembrane segment spans residues 398–418; that stretch reads LFFGPLGLTLTISTGFIGLVI. Topologically, residues 419-439 are cytoplasmic; sequence YEIYKIVKATGRGGIMKLEIK. The helical transmembrane segment at 440 to 460 threads the bilayer; it reads PILNIVLIYFSFVYIFAFNFH. The Extracellular segment spans residues 461–494; the sequence is NDNNSKNTYGSIDEFFQCTLESDDPSKCTVGGPS. N463 carries an N-linked (GlcNAc...) asparagine glycan. Residues 495 to 515 form a helical membrane-spanning segment; it reads IGSLGYFIYCIRIYGIYCFFL. Over 516–623 the chain is Cytoplasmic; that stretch reads QGLNERAFKI…DIEIGSVNIK (108 aa). Positions 552 to 590 are disordered; that stretch reads PSESGNSSTTAGTSTTINNSNINKKNNNSKPTLSTMDSN. Residues 555-580 show a composition bias toward low complexity; the sequence is SGNSSTTAGTSTTINNSNINKKNNNS.

This sequence belongs to the G-protein coupled receptor Fz/Smo family.

It localises to the membrane. The protein is Frizzled and smoothened-like protein M (fslM-1) of Dictyostelium discoideum (Social amoeba).